A 125-amino-acid polypeptide reads, in one-letter code: UPF0102 protein PBPRA3228 (125 aa).

The protein belongs to the UPF0102 family.

In Photobacterium profundum (strain SS9), this protein is UPF0102 protein PBPRA3228.